The primary structure comprises 543 residues: CTP synthase (543 aa).

An amidoligase domain region spans residues M1–L266. S14 contacts CTP. Residue S14 participates in UTP binding. ATP is bound by residues S15–I20 and D72. Residues D72 and E140 each contribute to the Mg(2+) site. CTP-binding positions include D147 to E149, K187 to Q192, and K223. Residues K187–Q192 and K223 contribute to the UTP site. K239–V241 is a binding site for ATP. The region spanning T291–K538 is the Glutamine amidotransferase type-1 domain. G352 serves as a coordination point for L-glutamine. C379 (nucleophile; for glutamine hydrolysis) is an active-site residue. L-glutamine-binding positions include L380–Q383, E403, and R466. Residues H511 and E513 contribute to the active site.

Belongs to the CTP synthase family. As to quaternary structure, homotetramer.

It carries out the reaction UTP + L-glutamine + ATP + H2O = CTP + L-glutamate + ADP + phosphate + 2 H(+). It catalyses the reaction L-glutamine + H2O = L-glutamate + NH4(+). The enzyme catalyses UTP + NH4(+) + ATP = CTP + ADP + phosphate + 2 H(+). It functions in the pathway pyrimidine metabolism; CTP biosynthesis via de novo pathway; CTP from UDP: step 2/2. Allosterically activated by GTP, when glutamine is the substrate; GTP has no effect on the reaction when ammonia is the substrate. The allosteric effector GTP functions by stabilizing the protein conformation that binds the tetrahedral intermediate(s) formed during glutamine hydrolysis. Inhibited by the product CTP, via allosteric rather than competitive inhibition. Functionally, catalyzes the ATP-dependent amination of UTP to CTP with either L-glutamine or ammonia as the source of nitrogen. Regulates intracellular CTP levels through interactions with the four ribonucleotide triphosphates. The polypeptide is CTP synthase (Baumannia cicadellinicola subsp. Homalodisca coagulata).